The primary structure comprises 429 residues: Probable beta-1,3-galactosyl-O-glycosyl-glycoprotein beta-1,6-N-acetylglucosaminyltransferase 7 (429 aa).

Residues 1 to 8 (MSQLRATK) lie on the Cytoplasmic side of the membrane. A helical; Signal-anchor for type II membrane protein transmembrane segment spans residues 9-25 (PGILVCAAIGIFVFLYL). Residues 26-429 (RNPTSEDPEE…ESHLNRRLNP (404 aa)) lie on the Extracellular side of the membrane. 4 disulfides stabilise this stretch: cysteine 53–cysteine 205, cysteine 139–cysteine 354, cysteine 160–cysteine 187, and cysteine 363–cysteine 394. N-linked (GlcNAc...) asparagine glycosylation is present at asparagine 87. A glycan (N-linked (GlcNAc...) asparagine) is linked at asparagine 272.

The protein belongs to the glycosyltransferase 14 family.

Its subcellular location is the golgi apparatus membrane. The protein operates within protein modification; protein glycosylation. Its function is as follows. Probable glycosyltransferase. This Sus scrofa (Pig) protein is Probable beta-1,3-galactosyl-O-glycosyl-glycoprotein beta-1,6-N-acetylglucosaminyltransferase 7.